We begin with the raw amino-acid sequence, 187 residues long: Elongation factor P (187 aa).

It belongs to the elongation factor P family.

Its subcellular location is the cytoplasm. It functions in the pathway protein biosynthesis; polypeptide chain elongation. Involved in peptide bond synthesis. Stimulates efficient translation and peptide-bond synthesis on native or reconstituted 70S ribosomes in vitro. Probably functions indirectly by altering the affinity of the ribosome for aminoacyl-tRNA, thus increasing their reactivity as acceptors for peptidyl transferase. This Roseiflexus sp. (strain RS-1) protein is Elongation factor P.